A 104-amino-acid chain; its full sequence is SOSS complex subunit C (104 aa).

Ala-2 is modified (N-acetylalanine). Ser-50 carries the phosphoserine modification.

Belongs to the SOSS-C family. Component of the SOSS complex, composed of SOSS-B (SOSS-B1/NABP2 or SOSS-B2/NABP1), SOSS-A/INTS3 and SOSS-C/INIP. SOSS complexes containing SOSS-B1/NABP2 are more abundant than complexes containing SOSS-B2/NABP1. Interacts with INTS3; the interaction is direct.

The protein localises to the nucleus. Its function is as follows. Component of the SOSS complex, a multiprotein complex that functions downstream of the MRN complex to promote DNA repair and G2/M checkpoint. The SOSS complex associates with single-stranded DNA at DNA lesions and influences diverse endpoints in the cellular DNA damage response including cell-cycle checkpoint activation, recombinational repair and maintenance of genomic stability. Required for efficient homologous recombination-dependent repair of double-strand breaks (DSBs) and ATM-dependent signaling pathways. The protein is SOSS complex subunit C (Inip) of Mus musculus (Mouse).